A 161-amino-acid polypeptide reads, in one-letter code: Inner membrane assembly complex subunit 17 (161 aa).

A mitochondrion-targeting transit peptide spans 1–22 (MLNPRPCVPRLLSAVARCHKPY). Topologically, residues 23–84 (STSIKSLEDL…QQQQQALKKF (62 aa)) are mitochondrial matrix. Residues 85-107 (VRPMWIFLLMSSFFYLTGHYIWW) form a helical membrane-spanning segment. Over 108–161 (KLEYDEREIELHKQVQALRQELDSAIAAKHSGKEPALSGAGAKKPKRWYLAWLW) the chain is Mitochondrial intermembrane. Residues 109-138 (LEYDEREIELHKQVQALRQELDSAIAAKHS) adopt a coiled-coil conformation.

This sequence belongs to the INA17 family. In terms of assembly, component of the inner membrane assembly (INA) complex, composed of INA17 and INA22. Interacts with a subset of F(1)F(0)-ATP synthase subunits of the F(1)-domain and the peripheral stalk.

It localises to the mitochondrion inner membrane. In terms of biological role, component of the INA complex (INAC) that promotes the biogenesis of mitochondrial F(1)F(0)-ATP synthase. INAC facilitates the assembly of the peripheral stalk and promotes the assembly of the catalytic F(1)-domain with the membrane-embedded F(0)-domain. This chain is Inner membrane assembly complex subunit 17, found in Lachancea thermotolerans (strain ATCC 56472 / CBS 6340 / NRRL Y-8284) (Yeast).